We begin with the raw amino-acid sequence, 1089 residues long: Pentatricopeptide repeat-containing protein MRL1, chloroplastic (1089 aa).

A chloroplast-targeting transit peptide spans 1-72 (MEVTSTTFIS…SIRSPRLVVR (72 aa)). PPR repeat units lie at residues 466 to 500 (TMST…GMTA), 501 to 535 (DCKL…GVEA), 536 to 570 (NLHT…NVKP), 571 to 605 (DRVV…THPI), 608 to 642 (DHIS…GIRG), 643 to 677 (TPEV…DVTP), 678 to 712 (DEVF…GIRL), 713 to 747 (GTIS…KLRP), 748 to 782 (TIST…GLKP), and 783 to 817 (NTIT…GVSP).

This sequence belongs to the PPR family. P subfamily. In terms of tissue distribution, expressed in stems, leaves and sepals.

It localises to the plastid. It is found in the chloroplast. Regulator of the large subunit (LS) of RuBisCO. Involved either in the processing or in the stabilization of the processed transcript, probably by acting as a barrier to the 5'&gt;3' degradation. The sequence is that of Pentatricopeptide repeat-containing protein MRL1, chloroplastic (MRL1) from Arabidopsis thaliana (Mouse-ear cress).